A 57-amino-acid polypeptide reads, in one-letter code: DNA gyrase inhibitor YacG (57 aa).

The Zn(2+) site is built by cysteine 10, cysteine 13, cysteine 25, and cysteine 29.

Belongs to the DNA gyrase inhibitor YacG family. As to quaternary structure, interacts with GyrB. Zn(2+) serves as cofactor.

Functionally, inhibits all the catalytic activities of DNA gyrase by preventing its interaction with DNA. Acts by binding directly to the C-terminal domain of GyrB, which probably disrupts DNA binding by the gyrase. The chain is DNA gyrase inhibitor YacG from Brucella melitensis biotype 1 (strain ATCC 23456 / CCUG 17765 / NCTC 10094 / 16M).